The primary structure comprises 62 residues: Alpha-conotoxin Vt1.27 (62 aa).

Positions 1-21 (MGMRMMFTVFLLVVLATTVVS) are cleaved as a signal peptide. Residues 22–40 (FTLDRASDGASAAADLVAR) constitute a propeptide that is removed on maturation. 2 disulfides stabilise this stretch: Cys46–Cys52 and Cys47–Cys61.

It belongs to the conotoxin A superfamily. As to expression, expressed by the venom duct.

Its subcellular location is the secreted. The short (45-61) amidated synthetic peptide inhibits the rat neuronal alpha-3-beta-2/CHRNA3-CHRNB2 nicotinic acetylcholine receptor (nAChR) (IC(50)=1.16 uM). It also inhibits Cav2.2/CACNA1C voltage-gated calcium channel (IC(50)=398 nM). In vivo, when tested in rat pain models, this short amidated peptide increases the pain threshold. This is Alpha-conotoxin Vt1.27 from Conus planorbis (Planorbis cone).